Here is a 356-residue protein sequence, read N- to C-terminus: Cyanide hydratase (356 aa).

Residues Tyr-8 to Leu-287 form the CN hydrolase domain. The Proton acceptor role is filled by Glu-48. Residue Lys-130 is part of the active site. Cys-165 acts as the Nucleophile in catalysis.

The protein belongs to the carbon-nitrogen hydrolase superfamily. Nitrilase family. Oligomer of dimers, forming left-handed helical fibers.

The catalysed reaction is formamide = hydrogen cyanide + H2O. Functionally, catalyzes the hydration of cyanide to formamide. Degradation of cyanide may be important for plant pathogenic fungi in infection of cyanogenic plants. Can also transform some nitriles like 2-cyanopyridine and fumaronitrile. The sequence is that of Cyanide hydratase from Aspergillus niger.